Consider the following 95-residue polypeptide: Aspartyl/glutamyl-tRNA(Asn/Gln) amidotransferase subunit C (95 aa).

Belongs to the GatC family. In terms of assembly, heterotrimer of A, B and C subunits.

It catalyses the reaction L-glutamyl-tRNA(Gln) + L-glutamine + ATP + H2O = L-glutaminyl-tRNA(Gln) + L-glutamate + ADP + phosphate + H(+). The catalysed reaction is L-aspartyl-tRNA(Asn) + L-glutamine + ATP + H2O = L-asparaginyl-tRNA(Asn) + L-glutamate + ADP + phosphate + 2 H(+). Its function is as follows. Allows the formation of correctly charged Asn-tRNA(Asn) or Gln-tRNA(Gln) through the transamidation of misacylated Asp-tRNA(Asn) or Glu-tRNA(Gln) in organisms which lack either or both of asparaginyl-tRNA or glutaminyl-tRNA synthetases. The reaction takes place in the presence of glutamine and ATP through an activated phospho-Asp-tRNA(Asn) or phospho-Glu-tRNA(Gln). The sequence is that of Aspartyl/glutamyl-tRNA(Asn/Gln) amidotransferase subunit C from Geobacter metallireducens (strain ATCC 53774 / DSM 7210 / GS-15).